We begin with the raw amino-acid sequence, 591 residues long: Proteasome-associated ATPase (591 aa).

Residues 8–77 (DSVAAARELE…LREEVDRLGQ (70 aa)) adopt a coiled-coil conformation. ATP is bound at residue 278–283 (GCGKTL). Positions 590-591 (YL) are docks into pockets in the proteasome alpha-ring.

The protein belongs to the AAA ATPase family. As to quaternary structure, homohexamer. Assembles into a hexameric ring structure that caps the 20S proteasome core. Strongly interacts with the prokaryotic ubiquitin-like protein Pup through a hydrophobic interface; the interacting region of ARC lies in its N-terminal coiled-coil domain. There is one Pup binding site per ARC hexamer ring. Upon ATP-binding, the C-terminus of ARC interacts with the alpha-rings of the proteasome core, possibly by binding to the intersubunit pockets.

It participates in protein degradation; proteasomal Pup-dependent pathway. In terms of biological role, ATPase which is responsible for recognizing, binding, unfolding and translocation of pupylated proteins into the bacterial 20S proteasome core particle. May be essential for opening the gate of the 20S proteasome via an interaction with its C-terminus, thereby allowing substrate entry and access to the site of proteolysis. Thus, the C-termini of the proteasomal ATPase may function like a 'key in a lock' to induce gate opening and therefore regulate proteolysis. This Rhodococcus jostii (strain RHA1) protein is Proteasome-associated ATPase.